We begin with the raw amino-acid sequence, 133 residues long: UPF0102 protein Fnod_1509 (133 aa).

This sequence belongs to the UPF0102 family.

The sequence is that of UPF0102 protein Fnod_1509 from Fervidobacterium nodosum (strain ATCC 35602 / DSM 5306 / Rt17-B1).